The chain runs to 252 residues: Triosephosphate isomerase (252 aa).

Position 10–12 (Asn10–Lys12) interacts with substrate. His96 serves as the catalytic Electrophile. Residue Glu168 is the Proton acceptor of the active site. Residues Gly174, Ser214, and Gly235–Gly236 contribute to the substrate site.

This sequence belongs to the triosephosphate isomerase family. Homodimer.

It localises to the cytoplasm. The catalysed reaction is D-glyceraldehyde 3-phosphate = dihydroxyacetone phosphate. It participates in carbohydrate biosynthesis; gluconeogenesis. It functions in the pathway carbohydrate degradation; glycolysis; D-glyceraldehyde 3-phosphate from glycerone phosphate: step 1/1. Its function is as follows. Involved in the gluconeogenesis. Catalyzes stereospecifically the conversion of dihydroxyacetone phosphate (DHAP) to D-glyceraldehyde-3-phosphate (G3P). The protein is Triosephosphate isomerase of Streptococcus pyogenes serotype M18 (strain MGAS8232).